The sequence spans 317 residues: Ferrochelatase (317 aa).

Residues His-192 and Glu-271 each coordinate Fe cation.

The protein belongs to the ferrochelatase family.

It is found in the cytoplasm. The catalysed reaction is heme b + 2 H(+) = protoporphyrin IX + Fe(2+). Its pathway is porphyrin-containing compound metabolism; protoheme biosynthesis; protoheme from protoporphyrin-IX: step 1/1. Functionally, catalyzes the ferrous insertion into protoporphyrin IX. This is Ferrochelatase from Geobacter metallireducens (strain ATCC 53774 / DSM 7210 / GS-15).